The sequence spans 364 residues: MEKLRVGIVFGGKSAEHEVSLQSAKNIVDAIDKSRFDVVLLGIDKQGQWHVSDASNYLLNADDPAHIALRPSATSLAQVPGKHEHQLIDAQNGQPLPTVDVIFPIVHGTLGEDGSLQGMLRVANLPFVGSDVLASAACMDKDVTKRLLRDAGLNIAPFITLTRANRHNISFAEVESKLGLPLFVKPANQGSSVGVSKVTSEEQYTIAVDLAFEFDHKVIVEQGIKGREIECAVLGNDNPQASTCGEIVLTSDFYAYDTKYIDEDGAKVVVPAAIAPEINDKIRAIAVQAYQTLGCAGMARVDVFLTPENEVVINEINTLPGFTNISMYPKLWQASGLGYTDLITRLIELALERHAADNALKTTM.

The region spanning 145–348 is the ATP-grasp domain; that stretch reads KRLLRDAGLN…YTDLITRLIE (204 aa). Residue 175–230 coordinates ATP; that stretch reads ESKLGLPLFVKPANQGSSVGVSKVTSEEQYTIAVDLAFEFDHKVIVEQGIKGREIE. Mg(2+)-binding residues include D302, E315, and N317.

It belongs to the D-alanine--D-alanine ligase family. Mg(2+) is required as a cofactor. Requires Mn(2+) as cofactor.

Its subcellular location is the cytoplasm. It carries out the reaction 2 D-alanine + ATP = D-alanyl-D-alanine + ADP + phosphate + H(+). It functions in the pathway cell wall biogenesis; peptidoglycan biosynthesis. Functionally, cell wall formation. This Escherichia coli O6:H1 (strain CFT073 / ATCC 700928 / UPEC) protein is D-alanine--D-alanine ligase A.